Here is a 348-residue protein sequence, read N- to C-terminus: Dihydroorotase (348 aa).

Residues His13 and His15 each contribute to the Zn(2+) site. Substrate is bound by residues 15–17 (HLR) and Asn41. Zn(2+)-binding residues include Lys99, His136, and His174. Position 99 is an N6-carboxylysine (Lys99). His136 lines the substrate pocket. Leu219 lines the substrate pocket. Asp247 serves as a coordination point for Zn(2+). Asp247 is an active-site residue. Residues His251 and Ala263 each coordinate substrate.

This sequence belongs to the metallo-dependent hydrolases superfamily. DHOase family. Class II DHOase subfamily. As to quaternary structure, homodimer. Zn(2+) is required as a cofactor.

The catalysed reaction is (S)-dihydroorotate + H2O = N-carbamoyl-L-aspartate + H(+). Its pathway is pyrimidine metabolism; UMP biosynthesis via de novo pathway; (S)-dihydroorotate from bicarbonate: step 3/3. In terms of biological role, catalyzes the reversible cyclization of carbamoyl aspartate to dihydroorotate. The protein is Dihydroorotase of Rhizobium etli (strain ATCC 51251 / DSM 11541 / JCM 21823 / NBRC 15573 / CFN 42).